We begin with the raw amino-acid sequence, 689 residues long: MEDTGIQRGIWDGDAKAVQQCLTDIFTSVYTTCDIPENAIFGPCVLSHTSLYDSIAFIALKSTDKRTVPYIFRVDTSAANGSSEGLMWLRLVQSARDKEEQNLEAYIKNGQLFYRSLRRIAKDEELLVWYGKELTELLLLCPSRSHNKMNGSSPYTCLECSQRFQFEFPYVAHLRFRCPKRLHSADISPQDEQGGGVGTKDHGGGGGGGKDQQQQQQEAPLGPGPKFCKAGPLHHYPSPSPESSNPSAAAGGSSAKPSTDFHNLARELENSRGGSSCSPAQSLSSGSGSGGGGGHQEAELSPDGIATGGGKGKRKFPEEAAEGGGGAGLVGGRGRFVERPLPASKEDLVCTPQQYRASGSYFGLEENGRLFAPPSPETGEAKRSAFVEVKKAARAASLQEEGTADGAGVASEDQDAGGGGGSSTPAAASPVGAEKLLAPRPGGPLPSRLEGGSPARGSAFTSVPQLGSAGSTSGGGGTGAGAAGGAGGGQGAASDERKSAFSQPARSFSQLSPLVLGQKLGALEPCHPADGVGPTRLYPAAADPLAVKLQGAADLNGGCGSLPSGGGGLPKQSPFLYATAFWPKSSAAAAAAAAAAAAGPLQLQLPSALTLLPPSFTSLCLPAQNWCAKCNASFRMTSDLVYHMRSHHKKEYAMEPLVKRRREEKLKCPICNESFRERHHLSRHMTSHN.

One can recognise an SET domain in the interval 16-131 (KAVQQCLTDI…KDEELLVWYG (116 aa)). Y130 contributes to the S-adenosyl-L-methionine binding site. A C2H2-type 1 zinc finger spans residues 155–183 (YTCLECSQRFQFEFPYVAHLRFRCPKRLH). Disordered stretches follow at residues 185–333 (ADIS…VGGR) and 397–506 (SLQE…QPAR). Positions 193–210 (QGGGVGTKDHGGGGGGGK) are enriched in gly residues. Composition is skewed to low complexity over residues 241–258 (PESS…AKPS) and 273–286 (GGSS…LSSG). Gly residues predominate over residues 322–333 (EGGGGAGLVGGR). The segment covering 423-433 (STPAAASPVGA) has biased composition (low complexity). A compositionally biased stretch (gly residues) spans 472–491 (TSGGGGTGAGAAGGAGGGQG). 2 consecutive C2H2-type zinc fingers follow at residues 625–648 (NWCA…RSHH) and 666–688 (LKCP…MTSH).

It belongs to the class V-like SAM-binding methyltransferase superfamily. As to quaternary structure, interacts with EPM2A and NHLRC1. This interaction sequesters EPM2A and NHLRC1 to the nucleus. Interacts with BHLHE22. As to expression, expressed in brain, heart, skeletal muscle, testes, prostate.

It is found in the nucleus. Functionally, probable histone methyltransferase, preferentially acting on 'Lys-9' of histone H3. Involved in the control of steroidogenesis through transcriptional repression of steroidogenesis marker genes such as CYP17A1 and LHCGR. Forms with BHLHE22 a transcriptional repressor complex controlling genes involved in neural development and neuronal differentiation. In the retina, it is required for rod bipolar and type 2 OFF-cone bipolar cell survival. This Homo sapiens (Human) protein is PR domain zinc finger protein 8 (PRDM8).